The following is a 327-amino-acid chain: Mitochondrial substrate carrier family protein A (327 aa).

Residues 1–36 (MVINNQNNNNQNNNQNNNNKNDNLNNSTTTTTTTAT) form a disordered region. Topologically, residues 1 to 48 (MVINNQNNNNQNNNQNNNNKNDNLNNSTTTTTTTATTTKSSTLFHSND) are mitochondrial intermembrane. Solcar repeat units follow at residues 43-132 (LFHS…FKRM), 140-224 (ISVI…IKEK), and 233-323 (PPLY…AITL). Residues 49–66 (FFSGLIAGIVSRTLTAPL) form a helical membrane-spanning segment. Residues 67 to 106 (ERIKILNQVEVILKDGTKYNRIIPAFKVIIKEEGIAGLFR) lie on the Mitochondrial matrix side of the membrane. A helical transmembrane segment spans residues 107-127 (GNFVNIIKAGPQSAIRFYSYG). At 128–145 (AFKRMASEPDGSISVINR) the chain is on the mitochondrial intermembrane side. Residues 146 to 166 (MWAGASSGVVSVALTHPLDVI) form a helical membrane-spanning segment. The Mitochondrial matrix segment spans residues 167–192 (KTHITVIAPTAATIKNVTKGIYRDLG). A helical transmembrane segment spans residues 193 to 213 (IIGFFRGLSAGILNIAPFAAL). The Mitochondrial intermembrane portion of the chain corresponds to 214-238 (NFTFYETIKEKTQQYILKSPPLYAP). A helical transmembrane segment spans residues 239–259 (SIYGAISGGLTMTILYPLDVV). Over 260 to 303 (KRRIMLQHFDRNQLPIYKNFIDAIIKITKTEGISALYKGIRPAY) the chain is Mitochondrial matrix. Residues 304–324 (LKVIPTVSINFLIYEGAITLF) traverse the membrane as a helical segment. Over 325 to 327 (EKK) the chain is Mitochondrial intermembrane.

This sequence belongs to the mitochondrial carrier (TC 2.A.29) family.

The protein localises to the mitochondrion inner membrane. In terms of biological role, calcium-dependent mitochondrial solute carrier. Mitochondrial solute carriers shuttle metabolites, nucleotides, and cofactors through the mitochondrial inner membrane. This is Mitochondrial substrate carrier family protein A (mcfA) from Dictyostelium discoideum (Social amoeba).